Here is a 122-residue protein sequence, read N- to C-terminus: Large ribosomal subunit protein uL18 (122 aa).

The tract at residues 1–24 (MLKKADKNANRLQRHKRVRRKISG) is disordered. A compositionally biased stretch (basic residues) spans 12-22 (LQRHKRVRRKI).

It belongs to the universal ribosomal protein uL18 family. As to quaternary structure, part of the 50S ribosomal subunit; part of the 5S rRNA/L5/L18/L25 subcomplex. Contacts the 5S and 23S rRNAs.

Functionally, this is one of the proteins that bind and probably mediate the attachment of the 5S RNA into the large ribosomal subunit, where it forms part of the central protuberance. This Clostridioides difficile (strain 630) (Peptoclostridium difficile) protein is Large ribosomal subunit protein uL18.